Reading from the N-terminus, the 402-residue chain is Phosphoglycerate kinase (402 aa).

Residues 24 to 26 (DLN), Arg39, 62 to 65 (HLGR), Arg121, and Arg161 each bind substrate. ATP contacts are provided by residues Lys211, Gly299, Glu330, and 359 to 362 (GGDS).

Belongs to the phosphoglycerate kinase family. As to quaternary structure, monomer.

Its subcellular location is the cytoplasm. The enzyme catalyses (2R)-3-phosphoglycerate + ATP = (2R)-3-phospho-glyceroyl phosphate + ADP. It functions in the pathway carbohydrate degradation; glycolysis; pyruvate from D-glyceraldehyde 3-phosphate: step 2/5. The protein is Phosphoglycerate kinase of Mycolicibacterium gilvum (strain PYR-GCK) (Mycobacterium gilvum (strain PYR-GCK)).